Reading from the N-terminus, the 460-residue chain is ERAD-associated E3 ubiquitin-protein ligase HRD1B (460 aa).

Residues 1–3 (MIQ) lie on the Cytoplasmic side of the membrane. The chain crosses the membrane as a helical span at residues 4 to 24 (LKVYAGLSTLATLVVIYHAFS). The Lumenal portion of the chain corresponds to 25–40 (SRGQFYPATVYLSTSK). A helical transmembrane segment spans residues 41-61 (INLVVLLNMGLVLMLSLWNLV). The Cytoplasmic segment spans residues 62–98 (KIVFLGSLREAEVERLNEQAWRELMEILFAITIFRQD). A helical transmembrane segment spans residues 99–119 (FSVGFISLVVTLLLIKGLHWM). The Lumenal portion of the chain corresponds to 120-140 (AQKRVEYIETTPSVTLLSHVR). The helical transmembrane segment at 141-161 (IVSFMVFLLILDCLLTYSSIQ) threads the bilayer. Topologically, residues 162–170 (QLIQSRKAS) are cytoplasmic. A helical transmembrane segment spans residues 171–191 (MSVFFTFEYMILATTTVSIIV). At 192 to 225 (KYAFYVTDMLKEGQWEGKPVYTFYLELVRDLLHL) the chain is on the lumenal side. The chain crosses the membrane as a helical span at residues 226–246 (SMYLCFFLMIFMNYGLPLHLI). At 247–460 (RELYETFRNF…TKGKSVADTA (214 aa)) the chain is on the cytoplasmic side. The segment at 292–330 (CIICREEMTSAKKLVCGHLFHVHCLRSWLERQNTCPTCR) adopts an RING-type; atypical zinc-finger fold. Residues 339–378 (ATSTASGNRGPHQESLQQGTGTSSSDGQGSSVSAAASENM) form a disordered region. Residues 353–375 (SLQQGTGTSSSDGQGSSVSAAAS) show a composition bias toward low complexity.

This sequence belongs to the HRD1 family.

It is found in the endoplasmic reticulum membrane. The enzyme catalyses S-ubiquitinyl-[E2 ubiquitin-conjugating enzyme]-L-cysteine + [acceptor protein]-L-lysine = [E2 ubiquitin-conjugating enzyme]-L-cysteine + N(6)-ubiquitinyl-[acceptor protein]-L-lysine.. It functions in the pathway protein modification; protein ubiquitination. Its function is as follows. Probable component of the HRD1 ubiquitin ligase complex that mediates the rapid degradation of misfolded endoplasmic reticulum (ER) proteins, a process called ER-associated degradation (ERAD). Targets the misfolded LRR receptor kinase BRI1. Functions redundantly with HRD3A. This Arabidopsis thaliana (Mouse-ear cress) protein is ERAD-associated E3 ubiquitin-protein ligase HRD1B.